We begin with the raw amino-acid sequence, 57 residues long: Beta-defensin 3 (57 aa).

A Pyrrolidone carboxylic acid modification is found at Q16. 3 disulfides stabilise this stretch: C24–C53, C31–C46, and C36–C54.

This sequence belongs to the beta-defensin family. Neutrophilic granules.

The protein resides in the secreted. Has bactericidal activity. Active against E.coli ML35 and S.aureus 502A. The sequence is that of Beta-defensin 3 (DEFB3) from Bos taurus (Bovine).